The following is a 377-amino-acid chain: MSNGIVIIGSGFAARQLVKNIRKQDASIPLTLIAADSMDEYNKPDLSHVISQGQRADDLTRQTAGEFAEQFNLRLFPHTWVTDIDAEAHVVKSQNNQWQYDKLVLATGASAFVPPVPGRELILTLNSQQEYRACETQLRDARRVLIVGGGLIGSELAMDFCRAGKAVTLIDNAASILASLMPPEVSSRLQHRLTEMGVHLLLKSQLQGLEKTDSGILATLDRQRCIEVDAVIAATGLRPETALARRAGLTINRGVCVDSYLQTSNADIYALGDCAEINGQVLPFLQPIQLSAMVLAKNLLGNNTPLKLPAMLVKIKTPELPLHLAGETQRQDLRWHIYTERQGMVARGVDDADQLRAFVVSEDRMKEAFGLLKTLSM.

Belongs to the FAD-dependent oxidoreductase family. Requires FAD as cofactor.

The protein resides in the cytoplasm. It carries out the reaction 2 reduced [nitric oxide reductase rubredoxin domain] + NAD(+) + H(+) = 2 oxidized [nitric oxide reductase rubredoxin domain] + NADH. It participates in nitrogen metabolism; nitric oxide reduction. Its function is as follows. One of at least two accessory proteins for anaerobic nitric oxide (NO) reductase. Reduces the rubredoxin moiety of NO reductase. The polypeptide is Nitric oxide reductase FlRd-NAD(+) reductase (Escherichia coli O6:K15:H31 (strain 536 / UPEC)).